A 131-amino-acid polypeptide reads, in one-letter code: Profilin-2 (131 aa).

This sequence belongs to the profilin family. Occurs in many kinds of cells as a complex with monomeric actin in a 1:1 ratio.

Its subcellular location is the cytoplasm. It localises to the cytoskeleton. Its function is as follows. Binds to actin and affects the structure of the cytoskeleton. At high concentrations, profilin prevents the polymerization of actin, whereas it enhances it at low concentrations. By binding to PIP2, it inhibits the formation of IP3 and DG. The sequence is that of Profilin-2 from Malus domestica (Apple).